We begin with the raw amino-acid sequence, 159 residues long: Transcription elongation factor GreA (159 aa).

The stretch at 5 to 77 (REVVLTAQGL…LETMLRKAVI (73 aa)) forms a coiled coil.

It belongs to the GreA/GreB family.

In terms of biological role, necessary for efficient RNA polymerase transcription elongation past template-encoded arresting sites. The arresting sites in DNA have the property of trapping a certain fraction of elongating RNA polymerases that pass through, resulting in locked ternary complexes. Cleavage of the nascent transcript by cleavage factors such as GreA or GreB allows the resumption of elongation from the new 3'terminus. GreA releases sequences of 2 to 3 nucleotides. This chain is Transcription elongation factor GreA, found in Alkaliphilus oremlandii (strain OhILAs) (Clostridium oremlandii (strain OhILAs)).